The sequence spans 361 residues: D-alanine--D-alanine ligase (361 aa).

In terms of domain architecture, ATP-grasp spans lysine 149–glutamine 353. Lysine 176 to glutamate 231 is a binding site for ATP. Residues aspartate 308, glutamate 320, and asparagine 322 each contribute to the Mg(2+) site.

Belongs to the D-alanine--D-alanine ligase family. It depends on Mg(2+) as a cofactor. Requires Mn(2+) as cofactor.

The protein localises to the cytoplasm. The enzyme catalyses 2 D-alanine + ATP = D-alanyl-D-alanine + ADP + phosphate + H(+). The protein operates within cell wall biogenesis; peptidoglycan biosynthesis. Cell wall formation. The sequence is that of D-alanine--D-alanine ligase from Corynebacterium efficiens (strain DSM 44549 / YS-314 / AJ 12310 / JCM 11189 / NBRC 100395).